Reading from the N-terminus, the 248-residue chain is Probable transcriptional regulatory protein PLES_43501 (248 aa).

It belongs to the TACO1 family.

Its subcellular location is the cytoplasm. The sequence is that of Probable transcriptional regulatory protein PLES_43501 from Pseudomonas aeruginosa (strain LESB58).